Reading from the N-terminus, the 442-residue chain is UDP-glucosyltransferase 29 (442 aa).

H20 serves as the catalytic Proton acceptor. An an anthocyanidin-binding site is contributed by H20. The active-site Charge relay is the D116. 9 residues coordinate UDP-alpha-D-glucose: T138, A318, Q320, H335, W338, S340, E343, D359, and Q360.

It belongs to the UDP-glycosyltransferase family. Expressed at higher levels in roots than in leaves.

The enzyme catalyses (20S)-ginsenoside F2 + UDP-alpha-D-glucose = (20S)-ginsenoside Rd + UDP + H(+). It carries out the reaction (20S)-ginsenoside Rh2 + UDP-alpha-D-glucose = (20S)-ginsenoside Rg3 + UDP + H(+). The protein operates within secondary metabolite biosynthesis; terpenoid biosynthesis. In terms of biological role, component of the dammarane-type triterpene saponins (e.g. PPD-type ginsenosides or panaxosides) biosynthetic pathway. Glycosyltransferase that catalyzes the conversion of ginsenoside Rh2 to ginsenoside Rg3. Triggers the biosynthesis of ginsenoside Rd from ginsenoside F2. The sequence is that of UDP-glucosyltransferase 29 from Panax ginseng (Korean ginseng).